A 170-amino-acid chain; its full sequence is Urease accessory protein UreE (170 aa).

Residues 137-170 form a disordered region; it reads PFDPESGAYAHAGREQSHAHSHEHSHADGHTHAH. Positions 148–170 are enriched in basic and acidic residues; the sequence is AGREQSHAHSHEHSHADGHTHAH.

This sequence belongs to the UreE family.

The protein localises to the cytoplasm. Involved in urease metallocenter assembly. Binds nickel. Probably functions as a nickel donor during metallocenter assembly. This Pseudoalteromonas translucida (strain TAC 125) protein is Urease accessory protein UreE.